The chain runs to 178 residues: MSRHPTVKWAQRSDWVYITVELPDAEDVKLKLEPEGKFFFSATSGASKTLYEVDLDLLDSVDVNESKASVSSRSVFYLVKKAESKWWNRLTKPEGKHPLYLKVDWDKWVDEDDEDKGGEGDMDFGDFDFNGLNMGDTDEIGEEVAEEDGDGEGETAAETKEKKIDGEKDEEGVNAKKD.

Residues 2 to 91 enclose the CS domain; that stretch reads SRHPTVKWAQ…AESKWWNRLT (90 aa). 2 stretches are compositionally biased toward acidic residues: residues 112 to 126 and 136 to 155; these read DDEDKGGEGDMDFGD and DTDEIGEEVAEEDGDGEGET. The interval 112 to 178 is disordered; that stretch reads DDEDKGGEGD…DEEGVNAKKD (67 aa). The span at 157–178 shows a compositional bias: basic and acidic residues; the sequence is AETKEKKIDGEKDEEGVNAKKD.

The protein belongs to the p23/wos2 family. In terms of assembly, interacts with HSP90 in an ATP-dependent manner.

Its function is as follows. Acts as a co-chaperone for HSP90. The chain is Co-chaperone protein p23-1 from Brassica napus (Rape).